Here is a 304-residue protein sequence, read N- to C-terminus: MGINMLDELKEDLVGIDIRFDEPLKRYTYTKVGGPADYLAFPRNRYELSRIVKFANKHNIPWMVLGNASNLIVRDGGIRGFVIMFDKLNGIAVNGYQVEAEAGANLIATTKVACFHSLTGFEFAAGIPGSIGGAVFMNAGAYGGEIAHILVSAQVLTKDGDIRTIDARDMRFGYRRSVLQETGEVIISAKFNLKPGDYEQIKHEMNRLNHLRELKQPLEYPSCGSVFKRPPGHFAGQLIMEANLKGHRIGGVEVSTKHAGFMVNVDQGTAKDYEDLIADVIAKVKENSGVTLEPEVRIIGDKLN.

One can recognise an FAD-binding PCMH-type domain in the interval 31 to 196 (KVGGPADYLA…ISAKFNLKPG (166 aa)). The active site involves Arg175. The active-site Proton donor is the Ser225. Glu295 is a catalytic residue.

Belongs to the MurB family. The cofactor is FAD.

It is found in the cytoplasm. The enzyme catalyses UDP-N-acetyl-alpha-D-muramate + NADP(+) = UDP-N-acetyl-3-O-(1-carboxyvinyl)-alpha-D-glucosamine + NADPH + H(+). It participates in cell wall biogenesis; peptidoglycan biosynthesis. Functionally, cell wall formation. This Streptococcus thermophilus (strain ATCC BAA-491 / LMD-9) protein is UDP-N-acetylenolpyruvoylglucosamine reductase.